Reading from the N-terminus, the 531-residue chain is T-complex protein 1 subunit zeta-2 (531 aa).

This sequence belongs to the TCP-1 chaperonin family. In terms of assembly, component of the chaperonin-containing T-complex (TRiC), a heterooligomeric complex of about 850 to 900 kDa that forms two stacked rings, 12 to 16 nm in diameter.

The protein localises to the cytoplasm. Its function is as follows. Component of the chaperonin-containing T-complex (TRiC), a molecular chaperone complex that assists the folding of proteins upon ATP hydrolysis. The sequence is that of T-complex protein 1 subunit zeta-2 (CCT6B) from Bos taurus (Bovine).